Here is a 545-residue protein sequence, read N- to C-terminus: Chaperonin GroEL 1 (545 aa).

ATP contacts are provided by residues 29 to 32 (TLGP), 86 to 90 (DGTTT), G413, 479 to 481 (DAA), and D495. The tract at residues 525 to 545 (PEPKENNPAGSGAGMGGDFDY) is disordered. The segment covering 535-545 (SGAGMGGDFDY) has biased composition (gly residues).

Belongs to the chaperonin (HSP60) family. As to quaternary structure, forms a cylinder of 14 subunits composed of two heptameric rings stacked back-to-back. Interacts with the co-chaperonin GroES.

It is found in the cytoplasm. The catalysed reaction is ATP + H2O + a folded polypeptide = ADP + phosphate + an unfolded polypeptide.. Functionally, together with its co-chaperonin GroES, plays an essential role in assisting protein folding. The GroEL-GroES system forms a nano-cage that allows encapsulation of the non-native substrate proteins and provides a physical environment optimized to promote and accelerate protein folding. The chain is Chaperonin GroEL 1 from Thermostichus vulcanus (Synechococcus vulcanus).